A 78-amino-acid chain; its full sequence is UPF0349 protein SSP1836 (78 aa).

The protein belongs to the UPF0349 family.

In Staphylococcus saprophyticus subsp. saprophyticus (strain ATCC 15305 / DSM 20229 / NCIMB 8711 / NCTC 7292 / S-41), this protein is UPF0349 protein SSP1836.